Reading from the N-terminus, the 90-residue chain is Small ribosomal subunit protein bS18 (90 aa).

This sequence belongs to the bacterial ribosomal protein bS18 family. Part of the 30S ribosomal subunit. Forms a tight heterodimer with protein bS6.

Its function is as follows. Binds as a heterodimer with protein bS6 to the central domain of the 16S rRNA, where it helps stabilize the platform of the 30S subunit. The polypeptide is Small ribosomal subunit protein bS18 (Bordetella bronchiseptica (strain ATCC BAA-588 / NCTC 13252 / RB50) (Alcaligenes bronchisepticus)).